The sequence spans 230 residues: Ribosomal RNA small subunit methyltransferase G (230 aa).

Residues Gly-95, Phe-100, 146-147, and Arg-159 contribute to the S-adenosyl-L-methionine site; that span reads GE.

It belongs to the methyltransferase superfamily. RNA methyltransferase RsmG family.

The protein resides in the cytoplasm. Specifically methylates the N7 position of a guanine in 16S rRNA. This Parabacteroides distasonis (strain ATCC 8503 / DSM 20701 / CIP 104284 / JCM 5825 / NCTC 11152) protein is Ribosomal RNA small subunit methyltransferase G.